Consider the following 487-residue polypeptide: Glutamyl-tRNA(Gln) amidotransferase subunit A (487 aa).

Active-site charge relay system residues include Lys-74 and Ser-149. Catalysis depends on Ser-173, which acts as the Acyl-ester intermediate.

The protein belongs to the amidase family. GatA subfamily. In terms of assembly, heterotrimer of A, B and C subunits.

It carries out the reaction L-glutamyl-tRNA(Gln) + L-glutamine + ATP + H2O = L-glutaminyl-tRNA(Gln) + L-glutamate + ADP + phosphate + H(+). Allows the formation of correctly charged Gln-tRNA(Gln) through the transamidation of misacylated Glu-tRNA(Gln) in organisms which lack glutaminyl-tRNA synthetase. The reaction takes place in the presence of glutamine and ATP through an activated gamma-phospho-Glu-tRNA(Gln). The protein is Glutamyl-tRNA(Gln) amidotransferase subunit A of Prochlorococcus marinus (strain MIT 9211).